The primary structure comprises 147 residues: uncharacterized protein (147 aa).

The HTH marR-type domain occupies 1 to 137; the sequence is MRDNTIGSLI…LYELMTKVHK (137 aa). The segment at residues 53-76 is a DNA-binding region (H-T-H motif); it reads QMELAEKVTVTQGGISRMLTRLEK.

This is an uncharacterized protein from Bacillus anthracis.